The sequence spans 167 residues: S-ribosylhomocysteine lyase (167 aa).

Residues H54, H58, and C128 each coordinate Fe cation.

Belongs to the LuxS family. Homodimer. It depends on Fe cation as a cofactor.

The catalysed reaction is S-(5-deoxy-D-ribos-5-yl)-L-homocysteine = (S)-4,5-dihydroxypentane-2,3-dione + L-homocysteine. In terms of biological role, involved in the synthesis of autoinducer 2 (AI-2) which is secreted by bacteria and is used to communicate both the cell density and the metabolic potential of the environment. The regulation of gene expression in response to changes in cell density is called quorum sensing. Catalyzes the transformation of S-ribosylhomocysteine (RHC) to homocysteine (HC) and 4,5-dihydroxy-2,3-pentadione (DPD). This chain is S-ribosylhomocysteine lyase, found in Haemophilus influenzae (strain 86-028NP).